Consider the following 42-residue polypeptide: CSRSDGWCGKTEDCCCPMKCIKAWYKQNGNCQNTISAIWKNC.

4 cysteine pairs are disulfide-bonded: cysteine 1-cysteine 15, cysteine 8-cysteine 20, cysteine 14-cysteine 31, and cysteine 16-cysteine 42.

Belongs to the neurotoxin 06 (delta-actx) family. In terms of tissue distribution, expressed by the venom gland.

It localises to the secreted. Lethal neurotoxin. Slows the inactivation of tetrodotoxin-sensitive voltage-gated sodium channels (Nav) by binding to site 3 of the channel, resulting in repetitive firing in autonomic and motor nerve fibers. This Hadronyche versuta (Blue mountains funnel-web spider) protein is Delta-hexatoxin-Hv1b.